Here is a 681-residue protein sequence, read N- to C-terminus: DNA-directed RNA polymerase subunit beta' (681 aa).

4 residues coordinate Zn(2+): Cys-69, Cys-71, Cys-87, and Cys-90. The Mg(2+) site is built by Asp-490, Asp-492, and Asp-494.

It belongs to the RNA polymerase beta' chain family. RpoC1 subfamily. In plastids the minimal PEP RNA polymerase catalytic core is composed of four subunits: alpha, beta, beta', and beta''. When a (nuclear-encoded) sigma factor is associated with the core the holoenzyme is formed, which can initiate transcription. It depends on Mg(2+) as a cofactor. Zn(2+) serves as cofactor.

Its subcellular location is the plastid. The protein resides in the chloroplast. The catalysed reaction is RNA(n) + a ribonucleoside 5'-triphosphate = RNA(n+1) + diphosphate. Functionally, DNA-dependent RNA polymerase catalyzes the transcription of DNA into RNA using the four ribonucleoside triphosphates as substrates. This is DNA-directed RNA polymerase subunit beta' from Liriodendron tulipifera (Tuliptree).